The chain runs to 549 residues: Glucose-6-phosphate isomerase (549 aa).

Glu355 serves as the catalytic Proton donor. Residues His386 and Lys514 contribute to the active site.

The protein belongs to the GPI family.

It is found in the cytoplasm. It carries out the reaction alpha-D-glucose 6-phosphate = beta-D-fructose 6-phosphate. Its pathway is carbohydrate biosynthesis; gluconeogenesis. It participates in carbohydrate degradation; glycolysis; D-glyceraldehyde 3-phosphate and glycerone phosphate from D-glucose: step 2/4. Functionally, catalyzes the reversible isomerization of glucose-6-phosphate to fructose-6-phosphate. The sequence is that of Glucose-6-phosphate isomerase from Salmonella enteritidis PT4 (strain P125109).